A 1210-amino-acid polypeptide reads, in one-letter code: Epidermal growth factor receptor (1210 aa).

The N-terminal stretch at 1 to 24 (MRPSGTARTTLLVLLTALCAAGGA) is a signal peptide. The Extracellular segment spans residues 25–647 (LEEKKVCQGT…VWPSGPKIPS (623 aa)). C31 and C58 form a disulfide bridge. The stretch at 75–300 (DLSFLKTIQE…CVKKCPRNYV (226 aa)) is one Approximate repeat. N-linked (GlcNAc...) asparagine glycans are attached at residues N128, N175, and N196. 13 disulfide bridges follow: C157–C187, C190–C199, C194–C207, C215–C223, C219–C231, C232–C240, C236–C248, C251–C260, C264–C291, C295–C307, C311–C326, C329–C333, and C337–C362. Phosphoserine is present on S229. N-linked (GlcNAc...) asparagine glycans are attached at residues N352, N413, and N444. One copy of the Approximate repeat lies at 390–600 (RELEILKTVK…CVKTCPAGIM (211 aa)). 11 disulfide bridges follow: C470-C499, C506-C515, C510-C523, C526-C535, C539-C555, C558-C571, C562-C579, C582-C591, C595-C617, C620-C628, and C624-C636. N528 carries an N-linked (GlcNAc...) asparagine glycan. A glycan (N-linked (GlcNAc...) asparagine) is linked at N568. N-linked (GlcNAc...) asparagine glycosylation is found at N603 and N623. A helical transmembrane segment spans residues 648–670 (IATGIVGGLLFIVVVALGIGLFM). The Cytoplasmic segment spans residues 671–1210 (RRRHIVRKRT…APPSSEFIGA (540 aa)). A Phosphothreonine; by PKC and PKD/PRKD1 modification is found at T680. Positions 690–706 (LVEPLTPSGEAPNQAHL) are important for dimerization, phosphorylation and activation. At T695 the chain carries Phosphothreonine; by PKD/PRKD1. At S697 the chain carries Phosphoserine. A Protein kinase domain is found at 714–981 (FKKIKVLGSG…KMARDPQRYL (268 aa)). Residue K718 forms a Glycyl lysine isopeptide (Lys-Gly) (interchain with G-Cter in ubiquitin) linkage. 720 to 728 (LGSGAFGTV) provides a ligand contact to ATP. A Glycyl lysine isopeptide (Lys-Gly) (interchain with G-Cter in ubiquitin) cross-link involves residue K739. An ATP-binding site is contributed by K747. Residue K747 is modified to N6-(2-hydroxyisobutyryl)lysine. Residues K756 and K759 each participate in a glycyl lysine isopeptide (Lys-Gly) (interchain with G-Cter in ubiquitin) cross-link. 792-793 (TQ) lines the ATP pocket. D839 acts as the Proton acceptor in catalysis. Residue D857 coordinates ATP. K869 is covalently cross-linked (Glycyl lysine isopeptide (Lys-Gly) (interchain with G-Cter in ubiquitin)). Position 871 is a phosphotyrosine (Y871). Residues K931, K962, and K972 each participate in a glycyl lysine isopeptide (Lys-Gly) (interchain with G-Cter in ubiquitin) cross-link. S993 and S997 each carry phosphoserine. Phosphotyrosine; by autocatalysis occurs at positions 1000 and 1018. Residues S1028 and S1041 each carry the phosphoserine modification. T1043 bears the Phosphothreonine mark. S1044 is modified (phosphoserine). The S-palmitoyl cysteine moiety is linked to residue C1051. Y1069 carries the phosphotyrosine modification. A phosphoserine mark is found at S1070 and S1071. A phosphotyrosine; by autocatalysis mark is found at Y1092 and Y1110. Residues 1113–1137 (QPLHPAPGRDLHYQNPHSNAVGNPE) form a disordered region. Over residues 1127–1137 (NPHSNAVGNPE) the composition is skewed to polar residues. C1146 carries the S-palmitoyl cysteine lipid modification. S1166 is subject to Phosphoserine. Y1172 carries the post-translational modification Phosphotyrosine; by autocatalysis. Y1197 is modified (phosphotyrosine). At R1199 the chain carries Omega-N-methylarginine.

It belongs to the protein kinase superfamily. Tyr protein kinase family. EGF receptor subfamily. Binding of the ligand triggers homo- and/or heterodimerization of the receptor triggering its autophosphorylation. Heterodimer with ERBB2. Forms a complex with CCDC88A/GIV (via SH2-like region) and GNAI3 which leads to enhanced EGFR signaling and triggering of cell migration; binding of CCDC88A requires autophosphorylation of the EGFR C-terminal region, and ligand stimulation is required for recruitment of GNAI3 to the complex. Interacts with ERRFI1; inhibits dimerization of the kinase domain and autophosphorylation. Part of a complex with ERBB2 and either PIK3C2A or PIK3C2B. Interacts with GRB2; an adapter protein coupling the receptor to downstream signaling pathways. Interacts with GAB2; involved in signaling downstream of EGFR. Interacts with STAT3; mediates EGFR downstream signaling in cell proliferation. Interacts with RIPK1; involved in NF-kappa-B activation. Interacts (autophosphorylated) with CBL, CBLB and CBLC; involved in EGFR ubiquitination and regulation; interaction with CBL is reduced in the presence of tensin TNS4. Interacts with SOCS5; regulates EGFR degradation through ELOC- and ELOB-mediated ubiquitination and proteasomal degradation. Interacts with PRMT5; methylates EGFR and enhances interaction with PTPN6. Interacts (phosphorylated) with PTPN6; inhibits EGFR-dependent activation of MAPK/ERK. Interacts with COPG1; essential for regulation of EGF-dependent nuclear transport of EGFR by retrograde trafficking from the Golgi to the ER. Interacts with TNK2; this interaction is dependent on EGF stimulation and kinase activity of EGFR. Interacts with PCNA; positively regulates PCNA. Interacts with PELP1. Interacts with MUC1. Interacts with AP2M1. Interacts with FER. Interacts (via SH2 domains) with GRB2, NCK1 and NCK2. Interacts with EPS8; mediates EPS8 phosphorylation. Interacts with ATXN2. Interacts with GAREM1. Interacts (ubiquitinated) with ANKRD13A/B/D; the interaction is direct and may regulate EGFR internalization after EGF stimulation. Interacts with GPER1; the interaction occurs in an estrogen-dependent manner. Interacts (via C-terminal cytoplasmic kinase domain) with ZPR1 (via zinc fingers). Interacts with RNF115 and RNF126. Interacts with GPRC5A (via its transmembrane domain). Interacts with FAM83B; positively regulates EGFR inducing its autophosphorylation in absence of stimulation by EGF. Interacts with LAPTM4B; positively correlates with EGFR activation. Interacts with STX19. Interacts with CD44. Interacts with PGRMC1; the interaction requires PGRMC1 homodimerization. Interacts with PIKFYVE. Interacts with NEU3. Interacts with TRAF4. Interacts with the ant venom OMEGA-myrmeciitoxin(02)-Mg1a. Interacts with CD82; this interaction facilitates ligand-induced endocytosis of the receptor and its subsequent desensitization. Post-translationally, monoubiquitinated and polyubiquitinated upon EGF stimulation; which does not affect tyrosine kinase activity or signaling capacity but may play a role in lysosomal targeting. Polyubiquitin linkage is mainly through 'Lys-63', but linkage through 'Lys-48', 'Lys-11' and 'Lys-29' also occurs. Deubiquitinated by OTUD7B, preventing degradation. Ubiquitinated by RNF115 and RNF126. Ubiquitinated by ZNRF1 or CBL at different lysines in response to EGF stimulation; leading to recruitment of the ESCRT machinery and subsequent degradation in the lysosomes. Deubiquitinated by UCHL1 leading to the inhibition of its degradation. In terms of processing, phosphorylated on Tyr residues in response to EGF. Phosphorylation at Ser-697 is partial and occurs only if Thr-695 is phosphorylated. Phosphorylation at Thr-680 and Thr-695 by PRKD1 inhibits EGF-induced MAPK8/JNK1 activation. Dephosphorylation by PTPRJ prevents endocytosis and stabilizes the receptor at the plasma membrane. Autophosphorylation at Tyr-1199 is stimulated by methylation at Arg-1199 and enhances interaction with PTPN6. Autophosphorylation at Tyr-1092 and/or Tyr-1110 recruits STAT3. Dephosphorylated by PTPN1 and PTPN2. Palmitoylated on Cys residues by ZDHHC20. Palmitoylation inhibits internalization after ligand binding, and increases the persistence of tyrosine-phosphorylated EGFR at the cell membrane. Palmitoylation increases the amplitude and duration of EGFR signaling. Post-translationally, methylated. Methylation at Arg-1199 by PRMT5 stimulates phosphorylation at Tyr-1197.

The protein resides in the cell membrane. It localises to the endoplasmic reticulum membrane. Its subcellular location is the golgi apparatus membrane. It is found in the nucleus membrane. The protein localises to the endosome. The protein resides in the endosome membrane. It localises to the nucleus. The enzyme catalyses L-tyrosyl-[protein] + ATP = O-phospho-L-tyrosyl-[protein] + ADP + H(+). Its activity is regulated as follows. Endocytosis and inhibition of the activated EGFR by phosphatases like PTPRJ and PTPRK constitute immediate regulatory mechanisms. Upon EGF-binding phosphorylates EPS15 that regulates EGFR endocytosis and activity. Moreover, inducible feedback inhibitors including LRIG1, SOCS4, SOCS5 and ERRFI1 constitute alternative regulatory mechanisms for the EGFR signaling. Receptor tyrosine kinase binding ligands of the EGF family and activating several signaling cascades to convert extracellular cues into appropriate cellular responses. Known ligands include EGF, TGFA/TGF-alpha, AREG, epigen/EPGN, BTC/betacellulin, epiregulin/EREG and HBEGF/heparin-binding EGF. Ligand binding triggers receptor homo- and/or heterodimerization and autophosphorylation on key cytoplasmic residues. The phosphorylated receptor recruits adapter proteins like GRB2 which in turn activates complex downstream signaling cascades. Activates at least 4 major downstream signaling cascades including the RAS-RAF-MEK-ERK, PI3 kinase-AKT, PLCgamma-PKC and STATs modules. May also activate the NF-kappa-B signaling cascade. Also directly phosphorylates other proteins like RGS16, activating its GTPase activity and probably coupling the EGF receptor signaling to the G protein-coupled receptor signaling. Also phosphorylates MUC1 and increases its interaction with SRC and CTNNB1/beta-catenin. Positively regulates cell migration via interaction with CCDC88A/GIV which retains EGFR at the cell membrane following ligand stimulation, promoting EGFR signaling which triggers cell migration. Plays a role in enhancing learning and memory performance. Plays a role in mammalian pain signaling (long-lasting hypersensitivity). This Mus musculus (Mouse) protein is Epidermal growth factor receptor.